Consider the following 118-residue polypeptide: Holo-[acyl-carrier-protein] synthase (118 aa).

Mg(2+) contacts are provided by D9 and E52.

The protein belongs to the P-Pant transferase superfamily. AcpS family. It depends on Mg(2+) as a cofactor.

Its subcellular location is the cytoplasm. It catalyses the reaction apo-[ACP] + CoA = holo-[ACP] + adenosine 3',5'-bisphosphate + H(+). Functionally, transfers the 4'-phosphopantetheine moiety from coenzyme A to a Ser of acyl-carrier-protein. This chain is Holo-[acyl-carrier-protein] synthase, found in Frankia alni (strain DSM 45986 / CECT 9034 / ACN14a).